A 178-amino-acid chain; its full sequence is Co-chaperone protein p23-1 (178 aa).

One can recognise a CS domain in the interval 2–91; that stretch reads SRHPTVKWAQ…AESKWWNRLT (90 aa). 2 stretches are compositionally biased toward acidic residues: residues 112-126 and 136-155; these read DDED…DFGD and DTDE…EGET. A disordered region spans residues 112–178; the sequence is DDEDKGGEGD…DEEGVNAKKD (67 aa). Residues 157–178 are compositionally biased toward basic and acidic residues; it reads AETKEKKIDGEKDEEGVNAKKD.

This sequence belongs to the p23/wos2 family. Interacts with HSP90 in an ATP-dependent manner.

Acts as a co-chaperone for HSP90. The sequence is that of Co-chaperone protein p23-1 from Brassica napus (Rape).